Here is a 279-residue protein sequence, read N- to C-terminus: NH(3)-dependent NAD(+) synthetase (279 aa).

Residue 46-53 (GISGGQDS) coordinates ATP. A Mg(2+)-binding site is contributed by Asp52. Arg145 provides a ligand contact to deamido-NAD(+). Thr165 serves as a coordination point for ATP. Mg(2+) is bound at residue Glu170. Deamido-NAD(+) is bound by residues Lys178 and Asp185. ATP-binding residues include Lys194 and Thr216. 265–266 (HK) serves as a coordination point for deamido-NAD(+).

It belongs to the NAD synthetase family. Homodimer.

It carries out the reaction deamido-NAD(+) + NH4(+) + ATP = AMP + diphosphate + NAD(+) + H(+). The protein operates within cofactor biosynthesis; NAD(+) biosynthesis; NAD(+) from deamido-NAD(+) (ammonia route): step 1/1. In terms of biological role, catalyzes the ATP-dependent amidation of deamido-NAD to form NAD. Uses ammonia as a nitrogen source. The polypeptide is NH(3)-dependent NAD(+) synthetase (Rhodococcus jostii (strain RHA1)).